The sequence spans 208 residues: Probable GTP-binding protein EngB (208 aa).

The 174-residue stretch at 22–195 (GLPEIALAGR…WGALEDIFVE (174 aa)) folds into the EngB-type G domain. GTP contacts are provided by residues 30-37 (GRSNVGKS), 57-61 (GKTRT), 75-78 (DLPG), 142-145 (TKSD), and 174-176 (ISS). Mg(2+)-binding residues include S37 and T59.

The protein belongs to the TRAFAC class TrmE-Era-EngA-EngB-Septin-like GTPase superfamily. EngB GTPase family. Mg(2+) is required as a cofactor.

Necessary for normal cell division and for the maintenance of normal septation. This Alkaliphilus metalliredigens (strain QYMF) protein is Probable GTP-binding protein EngB.